The primary structure comprises 431 residues: Glucose-1-phosphate adenylyltransferase (431 aa).

Lys-39 is a binding site for beta-D-fructose 1,6-bisphosphate. Positions 40, 46, and 52 each coordinate AMP. Alpha-D-glucose 1-phosphate is bound at residue Tyr-114. Arg-130 lines the AMP pocket. Residues Gly-179, 194-195 (EK), and Ser-212 contribute to the alpha-D-glucose 1-phosphate site. Position 386 (Arg-386) interacts with AMP. 429–431 (QER) contacts beta-D-fructose 1,6-bisphosphate.

It belongs to the bacterial/plant glucose-1-phosphate adenylyltransferase family. As to quaternary structure, homotetramer.

It catalyses the reaction alpha-D-glucose 1-phosphate + ATP + H(+) = ADP-alpha-D-glucose + diphosphate. The protein operates within glycan biosynthesis; glycogen biosynthesis. With respect to regulation, allosterically activated by fructose-1,6-bisphosphate (F16BP) and inhibited by AMP. In terms of biological role, involved in the biosynthesis of ADP-glucose, a building block required for the elongation reactions to produce glycogen. Catalyzes the reaction between ATP and alpha-D-glucose 1-phosphate (G1P) to produce pyrophosphate and ADP-Glc. This chain is Glucose-1-phosphate adenylyltransferase, found in Klebsiella pneumoniae (strain 342).